A 154-amino-acid chain; its full sequence is UPF0225 protein SG1365 (154 aa).

The protein belongs to the UPF0225 family.

This is UPF0225 protein SG1365 from Sodalis glossinidius (strain morsitans).